Consider the following 236-residue polypeptide: Purine nucleoside phosphorylase DeoD-type (236 aa).

H5 provides a ligand contact to a purine D-ribonucleoside. Phosphate is bound by residues G21, R25, R44, and 88-91; that span reads RVGS. A purine D-ribonucleoside contacts are provided by residues 180–182 and 204–205; these read EME and SD. Residue D205 is the Proton donor of the active site.

The protein belongs to the PNP/UDP phosphorylase family. In terms of assembly, homohexamer; trimer of homodimers.

It carries out the reaction a purine D-ribonucleoside + phosphate = a purine nucleobase + alpha-D-ribose 1-phosphate. The enzyme catalyses a purine 2'-deoxy-D-ribonucleoside + phosphate = a purine nucleobase + 2-deoxy-alpha-D-ribose 1-phosphate. Functionally, catalyzes the reversible phosphorolytic breakdown of the N-glycosidic bond in the beta-(deoxy)ribonucleoside molecules, with the formation of the corresponding free purine bases and pentose-1-phosphate. This is Purine nucleoside phosphorylase DeoD-type from Psychromonas ingrahamii (strain DSM 17664 / CCUG 51855 / 37).